Here is a 291-residue protein sequence, read N- to C-terminus: Nucleotide-binding protein MSMEG_3079/MSMEI_3001 (291 aa).

14–21 serves as a coordination point for ATP; the sequence is GLSGAGRG. 65 to 68 lines the GTP pocket; sequence DVRS.

It belongs to the RapZ-like family.

Displays ATPase and GTPase activities. This is Nucleotide-binding protein MSMEG_3079/MSMEI_3001 from Mycolicibacterium smegmatis (strain ATCC 700084 / mc(2)155) (Mycobacterium smegmatis).